Here is a 195-residue protein sequence, read N- to C-terminus: Putative kinase protein 143R (195 aa).

8–16 is an ATP binding site; sequence GIIGAGKST. Substrate is bound by residues glutamate 31, tyrosine 43, and glutamine 54. Residue glutamate 78 is the Proton acceptor of the active site. The substrate site is built by arginine 79 and glutamate 142.

It belongs to the DCK/DGK family.

The sequence is that of Putative kinase protein 143R from Acheta domesticus (House cricket).